Consider the following 250-residue polypeptide: Protein lin-28 homolog B (250 aa).

Disordered regions lie at residues 1 to 27 (MAEA…ESPL) and 98 to 126 (RVTG…KPKG). The segment covering 9-18 (GGEEPGRLPE) has biased composition (basic and acidic residues). The region spanning 29 to 102 (HGAGHCKWFN…GLESIRVTGP (74 aa)) is the CSD domain. The span at 114–125 (PKGKTVQKRKPK) shows a compositional bias: basic residues. 2 CCHC-type zinc fingers span residues 127-144 (DRCY…ECSL) and 149-166 (KKCH…NCPH). Residues Cys129, Cys132, His137, Cys142, Cys151, Cys154, His159, and Cys164 each coordinate Zn(2+). The disordered stretch occupies residues 165–250 (PHKTVSQQPT…GPSVQKRKKT (86 aa)). The segment covering 168 to 177 (TVSQQPTSSQ) has biased composition (polar residues). Over residues 200-209 (GYSSPSYSQE) the composition is skewed to low complexity. The span at 210-219 (GRSEISERSG) shows a compositional bias: basic and acidic residues.

The protein belongs to the lin-28 family.

The protein localises to the nucleus. It localises to the nucleolus. Its function is as follows. Suppressor of specific microRNA (miRNA) biogenesis. Binds target primary miRNA transcripts and sequester them in the nucleolus, away from the microprocessor complex, hence preventing their processing into mature miRNA. The specific interaction with target pri-miRNAs occurs via an 5'-GGAG-3' motif in the pre-miRNA terminal loop. The chain is Protein lin-28 homolog B (LIN28B) from Gallus gallus (Chicken).